The chain runs to 682 residues: DNA-directed RNA polymerase subunit beta' (682 aa).

Residues Cys69, Cys71, Cys87, and Cys90 each coordinate Zn(2+). 3 residues coordinate Mg(2+): Asp489, Asp491, and Asp493.

The protein belongs to the RNA polymerase beta' chain family. RpoC1 subfamily. As to quaternary structure, in plastids the minimal PEP RNA polymerase catalytic core is composed of four subunits: alpha, beta, beta', and beta''. When a (nuclear-encoded) sigma factor is associated with the core the holoenzyme is formed, which can initiate transcription. Requires Mg(2+) as cofactor. Zn(2+) is required as a cofactor.

It is found in the plastid. The protein resides in the chloroplast. It carries out the reaction RNA(n) + a ribonucleoside 5'-triphosphate = RNA(n+1) + diphosphate. DNA-dependent RNA polymerase catalyzes the transcription of DNA into RNA using the four ribonucleoside triphosphates as substrates. This Hordeum vulgare (Barley) protein is DNA-directed RNA polymerase subunit beta'.